The following is an 88-amino-acid chain: Small ribosomal subunit protein uS17 (88 aa).

Belongs to the universal ribosomal protein uS17 family. Part of the 30S ribosomal subunit.

Functionally, one of the primary rRNA binding proteins, it binds specifically to the 5'-end of 16S ribosomal RNA. This chain is Small ribosomal subunit protein uS17, found in Prochlorococcus marinus (strain NATL1A).